The chain runs to 179 residues: UPF0227 protein SO_2251 (179 aa).

Belongs to the UPF0227 family.

The chain is UPF0227 protein SO_2251 from Shewanella oneidensis (strain ATCC 700550 / JCM 31522 / CIP 106686 / LMG 19005 / NCIMB 14063 / MR-1).